The following is a 374-amino-acid chain: S-adenosylmethionine synthase 2 (374 aa).

E11 is a binding site for Mg(2+). H17 is an ATP binding site. K(+) is bound at residue E45. L-methionine is bound by residues E58 and Q101. Residues 169 to 171, 237 to 240, D248, 254 to 255, A271, K275, and K279 contribute to the ATP site; these read DGK, SGRF, and RK. D248 is an L-methionine binding site. K279 serves as a coordination point for L-methionine.

It belongs to the AdoMet synthase family. In terms of assembly, homotetramer. It depends on Mn(2+) as a cofactor. The cofactor is Mg(2+). Requires Co(2+) as cofactor. K(+) serves as cofactor. Expressed in vegetative and reproductive tissues.

The protein resides in the cytoplasm. It catalyses the reaction L-methionine + ATP + H2O = S-adenosyl-L-methionine + phosphate + diphosphate. Its pathway is amino-acid biosynthesis; S-adenosyl-L-methionine biosynthesis; S-adenosyl-L-methionine from L-methionine: step 1/1. In terms of biological role, catalyzes the formation of S-adenosylmethionine from methionine and ATP. The reaction comprises two steps that are both catalyzed by the same enzyme: formation of S-adenosylmethionine (AdoMet) and triphosphate, and subsequent hydrolysis of the triphosphate. The sequence is that of S-adenosylmethionine synthase 2 (SAMS2) from Pisum sativum (Garden pea).